A 200-amino-acid polypeptide reads, in one-letter code: Cell division protein SepF (200 aa).

Disordered stretches follow at residues 35–60 and 170–200; these read NLYQQENPQPPAPQESATAQNRRWRE and LHEVPQPPARPSRPTGSPNQTWGNETNRMAQ. A compositionally biased stretch (polar residues) spans 183–200; that stretch reads PTGSPNQTWGNETNRMAQ.

The protein belongs to the SepF family. In terms of assembly, homodimer. Interacts with FtsZ.

It is found in the cytoplasm. In terms of biological role, cell division protein that is part of the divisome complex and is recruited early to the Z-ring. Probably stimulates Z-ring formation, perhaps through the cross-linking of FtsZ protofilaments. Its function overlaps with FtsA. In Nostoc punctiforme (strain ATCC 29133 / PCC 73102), this protein is Cell division protein SepF.